A 387-amino-acid chain; its full sequence is 1-deoxy-D-xylulose 5-phosphate reductoisomerase (387 aa).

NADPH-binding residues include T10, G11, I13, N38, and N122. K123 provides a ligand contact to 1-deoxy-D-xylulose 5-phosphate. E124 is a binding site for NADPH. Position 148 (D148) interacts with Mn(2+). 1-deoxy-D-xylulose 5-phosphate is bound by residues S149, E150, S174, and H197. E150 is a binding site for Mn(2+). NADPH is bound at residue G203. The 1-deoxy-D-xylulose 5-phosphate site is built by S210, N215, K216, and E219. A Mn(2+)-binding site is contributed by E219.

This sequence belongs to the DXR family. Requires Mg(2+) as cofactor. It depends on Mn(2+) as a cofactor.

The catalysed reaction is 2-C-methyl-D-erythritol 4-phosphate + NADP(+) = 1-deoxy-D-xylulose 5-phosphate + NADPH + H(+). Its pathway is isoprenoid biosynthesis; isopentenyl diphosphate biosynthesis via DXP pathway; isopentenyl diphosphate from 1-deoxy-D-xylulose 5-phosphate: step 1/6. Functionally, catalyzes the NADPH-dependent rearrangement and reduction of 1-deoxy-D-xylulose-5-phosphate (DXP) to 2-C-methyl-D-erythritol 4-phosphate (MEP). The chain is 1-deoxy-D-xylulose 5-phosphate reductoisomerase from Ehrlichia ruminantium (strain Gardel).